The chain runs to 231 residues: Probable tetraspanin tspE (231 aa).

The Cytoplasmic portion of the chain corresponds to 1–21 (MTFVDNFEFNQNTPRLVRGPF). Residues 22-42 (IILNSIIFSLSFILLCSTGII) traverse the membrane as a helical segment. Topologically, residues 43 to 58 (IYYLNEYYLVKDLTIP) are extracellular. A helical transmembrane segment spans residues 59 to 79 (LGSFILSAYMVITTIVGGIAI). Topologically, residues 80 to 83 (WKKK) are cytoplasmic. The chain crosses the membrane as a helical span at residues 84–104 (LGLHLTFMVFLVVLIVCLVGV). The Extracellular portion of the chain corresponds to 105-195 (SAKMIVDSGN…VESILKYLGY (91 aa)). The helical transmembrane segment at 196–216 (YGIVLSVIELILLILSGFFLL) threads the bilayer. The Cytoplasmic portion of the chain corresponds to 217-231 (KTNKNVKSKSFILQD).

The protein belongs to the tetraspanin (TM4SF) family.

The protein resides in the membrane. The protein is Probable tetraspanin tspE (tspE) of Dictyostelium discoideum (Social amoeba).